The primary structure comprises 245 residues: Large ribosomal subunit protein uL3 (245 aa).

The residue at position 152 (Gln-152) is an N5-methylglutamine. The segment at 224–245 (RSKAVQAEAAAPAEAAAPEGDN) is disordered. Over residues 230–245 (AEAAAPAEAAAPEGDN) the composition is skewed to low complexity.

It belongs to the universal ribosomal protein uL3 family. In terms of assembly, part of the 50S ribosomal subunit. Forms a cluster with proteins L14 and L19. In terms of processing, methylated by PrmB.

In terms of biological role, one of the primary rRNA binding proteins, it binds directly near the 3'-end of the 23S rRNA, where it nucleates assembly of the 50S subunit. This Paracoccus denitrificans (strain Pd 1222) protein is Large ribosomal subunit protein uL3.